A 563-amino-acid chain; its full sequence is Calnexin homolog (563 aa).

Residues 1-23 (MRFNAAITGALVSSATLMGQAHA) form the signal peptide. Residues 24-493 (EETEKKADAT…PINAVKQVPE (470 aa)) lie on the Lumenal side of the membrane. Aspartate 98 lines the Ca(2+) pocket. Cysteine 141 and cysteine 175 are joined by a disulfide. An alpha-D-glucoside contacts are provided by tyrosine 145, lysine 147, tyrosine 166, and aspartate 173. Asparagine 236 carries N-linked (GlcNAc...) asparagine glycosylation. The tract at residues 241-323 (EDFAPPVNPE…EKPEDWDDEE (83 aa)) is disordered. Basic and acidic residues predominate over residues 249-279 (PEKEIDDPKDKKPADWVDEAKIPDPEAKKPD). A p domain (Extended arm) region spans residues 253-386 (IDDPKDKKPA…RKIPNPAYFE (134 aa)). The span at 280–305 (DWDEDAPYEIVDEEATMPEDWLEDEP) shows a compositional bias: acidic residues. Cysteine 337 and cysteine 343 are oxidised to a cystine. An an alpha-D-glucoside-binding site is contributed by glutamate 402. Aspartate 413 contacts Ca(2+). A helical transmembrane segment spans residues 494 to 514 (VAGGLGALLLTMILVIVGAVG). Over 515 to 563 (ASSPAPAAAAKKGKEAASAAKEKASEAVSSAADTAKGAATKRNTRSSAQ) the chain is Cytoplasmic. The interval 521 to 563 (AAAAKKGKEAASAAKEKASEAVSSAADTAKGAATKRNTRSSAQ) is disordered. Over residues 526 to 539 (KGKEAASAAKEKAS) the composition is skewed to basic and acidic residues.

This sequence belongs to the calreticulin family.

The protein resides in the endoplasmic reticulum membrane. Functionally, interacts with newly synthesized monoglucosylated glycoproteins in the endoplasmic reticulum. It may act in assisting protein assembly and/or in the retention within the ER of unassembled protein subunits. It seems to play a major role in the quality control apparatus of the ER by the retention of incorrectly folded proteins. This chain is Calnexin homolog, found in Aspergillus fumigatus (strain ATCC MYA-4609 / CBS 101355 / FGSC A1100 / Af293) (Neosartorya fumigata).